A 1117-amino-acid polypeptide reads, in one-letter code: Isoleucine--tRNA ligase (1117 aa).

The short motif at 64–74 (PFANGLPHYGH) is the 'HIGH' region element. The short motif at 647–651 (KLSKR) is the 'KMSKS' region element. Residue Lys-650 coordinates ATP.

This sequence belongs to the class-I aminoacyl-tRNA synthetase family. IleS type 2 subfamily. In terms of assembly, monomer. It depends on Zn(2+) as a cofactor.

Its subcellular location is the cytoplasm. It carries out the reaction tRNA(Ile) + L-isoleucine + ATP = L-isoleucyl-tRNA(Ile) + AMP + diphosphate. In terms of biological role, catalyzes the attachment of isoleucine to tRNA(Ile). As IleRS can inadvertently accommodate and process structurally similar amino acids such as valine, to avoid such errors it has two additional distinct tRNA(Ile)-dependent editing activities. One activity is designated as 'pretransfer' editing and involves the hydrolysis of activated Val-AMP. The other activity is designated 'posttransfer' editing and involves deacylation of mischarged Val-tRNA(Ile). The sequence is that of Isoleucine--tRNA ligase from Ehrlichia ruminantium (strain Welgevonden).